Consider the following 314-residue polypeptide: Zinc transporter ZIP3 (314 aa).

Residues 1-3 (MVK) lie on the Extracellular side of the membrane. Residues 4 to 24 (LLVAKILCMVGMFFFMLLGSL) traverse the membrane as a helical segment. The Cytoplasmic segment spans residues 25-42 (LPVKIIEMDFEKAHRSKK). A helical membrane pass occupies residues 43-63 (ILSLCNTFGGGVFLATCFNAL). At 64–85 (LPAVREKLKEVLTLAHISTDYP) the chain is on the extracellular side. Residues 86–106 (LAETIMLLGFFMTVFLEQLVL) form a helical membrane-spanning segment. Residues 107 to 169 (TFRKERPAFI…QELSRSSPLR (63 aa)) are Cytoplasmic-facing. 2 positions are modified to phosphoserine: Ser125 and Ser129. Residues 170-190 (LLSLVFALSAHSVFEGLALGL) traverse the membrane as a helical segment. Over 191–196 (QEEGEK) the chain is Extracellular. The helical transmembrane segment at 197–217 (VVSLFVGVAIHETLVAVALGI) threads the bilayer. Residues 218–229 (NMARSAMALRDA) lie on the Cytoplasmic side of the membrane. The chain crosses the membrane as a helical span at residues 230 to 250 (AKLAVTVSAMIPLGISLGLGI). Over 251–262 (DSAQGMPSSVAS) the chain is Extracellular. Residues 263-283 (VLLQGLAGGTFLFVTFFEILA) traverse the membrane as a helical segment. The Cytoplasmic segment spans residues 284-292 (KELEEKSDR). Residues 293-313 (LLKVLFLVLGYTVLAGMVFIK) traverse the membrane as a helical segment. A topological domain (extracellular) is located at residue Trp314.

The protein belongs to the ZIP transporter (TC 2.A.5) family.

Its subcellular location is the cell membrane. It localises to the apical cell membrane. The catalysed reaction is Zn(2+)(in) = Zn(2+)(out). In terms of biological role, transporter for the divalent cation Zn(2+). Mediates the influx of Zn(2+) into cells from extracellular space. Controls Zn(2+) accumulation into dentate gyrus granule cells in the hippocampus. Mediates Zn(2+) reuptake from the secreted milk within the alveolar lumen. The chain is Zinc transporter ZIP3 (SLC39A3) from Bos taurus (Bovine).